Here is an 826-residue protein sequence, read N- to C-terminus: Zinc phosphodiesterase ELAC protein 2 (826 aa).

The N-terminal 16 residues, 1–16, are a transit peptide targeting the mitochondrion; sequence MWALCSLLRSAAGRTM. 2 disordered regions span residues 16-51 and 188-231; these read MSQG…PSGC and EQRR…VSQR. Over residues 27 to 38 the composition is skewed to basic and acidic residues; that stretch reads ARRERPRKDPLR. 6 positions are modified to phosphoserine: Ser-199, Ser-208, Ser-212, Ser-229, Ser-618, and Ser-736. The span at 208-224 shows a compositional bias: basic and acidic residues; it reads SPERSSDSESNENEPHL. The interval 798–826 is disordered; sequence ELAGGLEDGEPQQKRAHTEEPQAKKVRAQ. Over residues 808–820 the composition is skewed to basic and acidic residues; that stretch reads PQQKRAHTEEPQA.

It belongs to the RNase Z family. Homodimer. Interacts with PTCD1. Zn(2+) is required as a cofactor.

It localises to the mitochondrion. The protein resides in the mitochondrion matrix. The protein localises to the mitochondrion nucleoid. Its subcellular location is the nucleus. The catalysed reaction is Endonucleolytic cleavage of RNA, removing extra 3' nucleotides from tRNA precursor, generating 3' termini of tRNAs. A 3'-hydroxy group is left at the tRNA terminus and a 5'-phosphoryl group is left at the trailer molecule.. Its function is as follows. Zinc phosphodiesterase, which displays mitochondrial tRNA 3'-processing endonuclease activity. Involved in tRNA maturation, by removing a 3'-trailer from precursor tRNA. Associates with mitochondrial DNA complexes at the nucleoids to initiate RNA processing and ribosome assembly. In Pan troglodytes (Chimpanzee), this protein is Zinc phosphodiesterase ELAC protein 2 (ELAC2).